Here is a 592-residue protein sequence, read N- to C-terminus: Bifunctional enzyme BirA/CoaX (592 aa).

A biotin--protein ligase region spans residues 1-329 (MTVLKLSHWR…ISLRSDDRPV (329 aa)). One can recognise a BPL/LPL catalytic domain in the interval 83-259 (QTALKHECAS…ELDAVLLQYA (177 aa)). Positions 336–592 (DSERFLLLDG…AAEGREYEHI (257 aa)) are type III pantothenate kinase. 344 to 351 (DGGNSRLK) lines the ATP pocket. Substrate is bound by residues Tyr-426 and 433 to 436 (GSDR). Residue Asp-435 is the Proton acceptor of the active site. Position 458 (Thr-458) interacts with ATP. Residue Thr-508 participates in substrate binding.

This sequence in the N-terminal section; belongs to the biotin--protein ligase family. In the C-terminal section; belongs to the type III pantothenate kinase family. Requires NH4(+) as cofactor. K(+) is required as a cofactor.

The protein localises to the cytoplasm. It carries out the reaction biotin + L-lysyl-[protein] + ATP = N(6)-biotinyl-L-lysyl-[protein] + AMP + diphosphate + H(+). The enzyme catalyses (R)-pantothenate + ATP = (R)-4'-phosphopantothenate + ADP + H(+). The protein operates within cofactor biosynthesis; coenzyme A biosynthesis; CoA from (R)-pantothenate: step 1/5. Activates biotin to form biotinyl-5'-adenylate and transfers the biotin moiety to biotin-accepting proteins. Its function is as follows. Catalyzes the phosphorylation of pantothenate (Pan), the first step in CoA biosynthesis. This chain is Bifunctional enzyme BirA/CoaX (birA/coaX), found in Neisseria meningitidis serogroup B (strain ATCC BAA-335 / MC58).